The sequence spans 205 residues: Probable GTP-binding protein EngB (205 aa).

The 175-residue stretch at 27–201 folds into the EngB-type G domain; sequence TGIEIAFAGR…AVKLDFWFSP (175 aa). GTP contacts are provided by residues 35-42, 62-66, 80-83, 147-150, and 180-182; these read GRSNAGKS, GRTQL, DLPG, TKAD, and FSA. Positions 42 and 64 each coordinate Mg(2+).

Belongs to the TRAFAC class TrmE-Era-EngA-EngB-Septin-like GTPase superfamily. EngB GTPase family. It depends on Mg(2+) as a cofactor.

In terms of biological role, necessary for normal cell division and for the maintenance of normal septation. The sequence is that of Probable GTP-binding protein EngB from Haemophilus influenzae (strain PittGG).